We begin with the raw amino-acid sequence, 311 residues long: Methionyl-tRNA formyltransferase (311 aa).

(6S)-5,6,7,8-tetrahydrofolate is bound at residue Ser109–Pro112.

This sequence belongs to the Fmt family.

It carries out the reaction L-methionyl-tRNA(fMet) + (6R)-10-formyltetrahydrofolate = N-formyl-L-methionyl-tRNA(fMet) + (6S)-5,6,7,8-tetrahydrofolate + H(+). Functionally, attaches a formyl group to the free amino group of methionyl-tRNA(fMet). The formyl group appears to play a dual role in the initiator identity of N-formylmethionyl-tRNA by promoting its recognition by IF2 and preventing the misappropriation of this tRNA by the elongation apparatus. This is Methionyl-tRNA formyltransferase (fmt) from Mycoplasma pneumoniae (strain ATCC 29342 / M129 / Subtype 1) (Mycoplasmoides pneumoniae).